The primary structure comprises 158 residues: Endoribonuclease YbeY (158 aa).

The Zn(2+) site is built by H117, H121, and H127.

It belongs to the endoribonuclease YbeY family. It depends on Zn(2+) as a cofactor.

It localises to the cytoplasm. Functionally, single strand-specific metallo-endoribonuclease involved in late-stage 70S ribosome quality control and in maturation of the 3' terminus of the 16S rRNA. This is Endoribonuclease YbeY from Francisella philomiragia subsp. philomiragia (strain ATCC 25017 / CCUG 19701 / FSC 153 / O#319-036).